A 280-amino-acid polypeptide reads, in one-letter code: Phosphatidylglycerol--prolipoprotein diacylglyceryl transferase (280 aa).

The next 2 helical transmembrane spans lie at 59 to 79 and 97 to 117; these read FLTWATLGVVLGGRLGYILFY and GGMSFHGGALGVIVALALFTW. Arginine 142 provides a ligand contact to a 1,2-diacyl-sn-glycero-3-phospho-(1'-sn-glycerol). 2 consecutive transmembrane segments (helical) span residues 207 to 227 and 233 to 253; these read GFLAGLFLFGYAVARSICECF and FIGFLPFGTTMGQILCIPMAI.

The protein belongs to the Lgt family.

The protein resides in the cell inner membrane. The catalysed reaction is L-cysteinyl-[prolipoprotein] + a 1,2-diacyl-sn-glycero-3-phospho-(1'-sn-glycerol) = an S-1,2-diacyl-sn-glyceryl-L-cysteinyl-[prolipoprotein] + sn-glycerol 1-phosphate + H(+). Its pathway is protein modification; lipoprotein biosynthesis (diacylglyceryl transfer). Its function is as follows. Catalyzes the transfer of the diacylglyceryl group from phosphatidylglycerol to the sulfhydryl group of the N-terminal cysteine of a prolipoprotein, the first step in the formation of mature lipoproteins. The polypeptide is Phosphatidylglycerol--prolipoprotein diacylglyceryl transferase (Gluconacetobacter diazotrophicus (strain ATCC 49037 / DSM 5601 / CCUG 37298 / CIP 103539 / LMG 7603 / PAl5)).